The chain runs to 128 residues: uncharacterized protein (128 aa).

The disordered stretch occupies residues 24–43 (KRTQNNTEQASRAINSPLQS). The span at 26 to 43 (TQNNTEQASRAINSPLQS) shows a compositional bias: polar residues.

This is an uncharacterized protein from Homo sapiens (Human).